A 344-amino-acid polypeptide reads, in one-letter code: Ferrochelatase (344 aa).

2 residues coordinate Fe cation: His-214 and Glu-295.

This sequence belongs to the ferrochelatase family.

It localises to the cytoplasm. The enzyme catalyses heme b + 2 H(+) = protoporphyrin IX + Fe(2+). Its pathway is porphyrin-containing compound metabolism; protoheme biosynthesis; protoheme from protoporphyrin-IX: step 1/1. Catalyzes the ferrous insertion into protoporphyrin IX. The protein is Ferrochelatase of Allorhizobium ampelinum (strain ATCC BAA-846 / DSM 112012 / S4) (Agrobacterium vitis (strain S4)).